The chain runs to 275 residues: Polyamine aminopropyltransferase 1 (275 aa).

In terms of domain architecture, PABS spans 2–235 (ELWFTEKQTK…GLWTFTIGSK (234 aa)). Residue Gln31 coordinates S-methyl-5'-thioadenosine. Spermidine-binding residues include His62 and Asp86. S-methyl-5'-thioadenosine is bound by residues Glu106 and 137–138 (DG). The Proton acceptor role is filled by Asp155. Residue 155–158 (DSTE) coordinates spermidine. Pro162 serves as a coordination point for S-methyl-5'-thioadenosine.

The protein belongs to the spermidine/spermine synthase family. In terms of assembly, homodimer or homotetramer.

It is found in the cytoplasm. It catalyses the reaction S-adenosyl 3-(methylsulfanyl)propylamine + putrescine = S-methyl-5'-thioadenosine + spermidine + H(+). It participates in amine and polyamine biosynthesis; spermidine biosynthesis; spermidine from putrescine: step 1/1. Its function is as follows. Catalyzes the irreversible transfer of a propylamine group from the amino donor S-adenosylmethioninamine (decarboxy-AdoMet) to putrescine (1,4-diaminobutane) to yield spermidine. The sequence is that of Polyamine aminopropyltransferase 1 from Bacillus cereus (strain ATCC 14579 / DSM 31 / CCUG 7414 / JCM 2152 / NBRC 15305 / NCIMB 9373 / NCTC 2599 / NRRL B-3711).